Reading from the N-terminus, the 600-residue chain is NADH-ubiquinone oxidoreductase chain 5 (600 aa).

16 consecutive transmembrane segments (helical) span residues 1-21 (MYIL…LFGR), 27-47 (GAGI…LLIF), 81-101 (LTAV…IFST), 110-130 (VPRF…LVTS), 136-156 (LFIG…FWLT), 178-198 (FVLA…ASVF), 200-220 (IVAL…FIGA), 241-261 (TPVS…FLLI), 274-294 (LMVV…IGLV), 301-323 (VIAY…SQYS), 327-347 (FHLM…GSVI), 366-386 (IPFT…FPYL), 404-424 (YLAF…AYSL), 450-470 (WNLT…GYLT), 488-508 (SIKL…VVLY), and 520-540 (SPVG…NYII).

The protein belongs to the complex I subunit 5 family.

Its subcellular location is the mitochondrion inner membrane. The catalysed reaction is a ubiquinone + NADH + 5 H(+)(in) = a ubiquinol + NAD(+) + 4 H(+)(out). Core subunit of the mitochondrial membrane respiratory chain NADH dehydrogenase (Complex I) that is believed to belong to the minimal assembly required for catalysis. Complex I functions in the transfer of electrons from NADH to the respiratory chain. The immediate electron acceptor for the enzyme is believed to be ubiquinone. The protein is NADH-ubiquinone oxidoreductase chain 5 (ND5) of Metridium senile (Brown sea anemone).